The following is a 198-amino-acid chain: Large ribosomal subunit protein bL27c (198 aa).

A chloroplast-targeting transit peptide spans 1 to 58 (MAMATSMSLNLIGAFKGLSLSSTSSFLRGDLSFSPKTSFTVTLPLENLQAPIPLTIES).

The protein belongs to the bacterial ribosomal protein bL27 family. Part of the 50S ribosomal subunit.

It localises to the plastid. It is found in the chloroplast. The polypeptide is Large ribosomal subunit protein bL27c (RPL27) (Arabidopsis thaliana (Mouse-ear cress)).